The chain runs to 416 residues: Kynureninase (416 aa).

Residues Thr97, Ser98, 129–132 (FPTD), Thr172, Asp201, His204, and Tyr226 each bind pyridoxal 5'-phosphate. The residue at position 227 (Lys227) is an N6-(pyridoxal phosphate)lysine. Pyridoxal 5'-phosphate is bound by residues Trp256 and Thr282.

The protein belongs to the kynureninase family. In terms of assembly, homodimer. Pyridoxal 5'-phosphate serves as cofactor.

It catalyses the reaction L-kynurenine + H2O = anthranilate + L-alanine + H(+). The catalysed reaction is 3-hydroxy-L-kynurenine + H2O = 3-hydroxyanthranilate + L-alanine + H(+). It participates in amino-acid degradation; L-kynurenine degradation; L-alanine and anthranilate from L-kynurenine: step 1/1. The protein operates within cofactor biosynthesis; NAD(+) biosynthesis; quinolinate from L-kynurenine: step 2/3. Catalyzes the cleavage of L-kynurenine (L-Kyn) and L-3-hydroxykynurenine (L-3OHKyn) into anthranilic acid (AA) and 3-hydroxyanthranilic acid (3-OHAA), respectively. The chain is Kynureninase from Pseudomonas fluorescens.